A 221-amino-acid polypeptide reads, in one-letter code: Response regulator protein PmrA (221 aa).

The region spanning 2–116 (RILLAEDDLL…ELQARVRALT (115 aa)) is the Response regulatory domain. 4-aspartylphosphate is present on aspartate 51. Residues 124–218 (LPQLVHGELR…VRGIGYGIDQ (95 aa)) constitute a DNA-binding region (ompR/PhoB-type).

The protein localises to the cytoplasm. Member of the two-component regulatory system PmrA/PmrB that plays a role in the regulation of resistance towards polymyxin B and cationic antimicrobial peptides in response to limiting concentrations of Mg(2+). Functions as a transcriptional activator by direct binding to a cis-acting sequence upstream of the target gene promoters including lipase lipA and pmrH promoters. Also autoregulates its own pmrAB operon under Mg(2+)-limiting conditions. The chain is Response regulator protein PmrA (pmrA) from Pseudomonas aeruginosa (strain ATCC 15692 / DSM 22644 / CIP 104116 / JCM 14847 / LMG 12228 / 1C / PRS 101 / PAO1).